Consider the following 499-residue polypeptide: MEMILISLCLTTLLAFLFLKPLLKRITTTKPKLPPSPWRLPVIGNLHQLGPNPHRYLHSLSLRYGPLMLLHFGRVPVLVVSCPDVTNDIMKTHDLKFANRPKSKAINIFMEGGRDIIFGPYGEDWKSMKSLGVVHLLNNKMVRSFENLREEEIKVMTEKLEEASSSSSSVNLSKLLMTLTNDIICRITLGRKYNEEEGGIDIKNLVMTSSEFFGKFFFGDFIPSLAWIDWISGIDDKMKDINNKLDCFLDSMVQEHVDADHKEPSDFIDMLLLIQKDKTKRFKFDRSDLILILKDMFFSGTATTASQLEWTMTELMRHPECMKKLQDEINSFSTHNLNVTEKEVEKMNYLHCVIKEGLRLHPSGPLLFRLPSEDVQLKGYDISAGTHVIINAWALQRNPAIWGLDANEYRPERHFWYEFGFQRTDSKFVPFGAGRRLCPGIGFSLVLSKLALANLVKRFNWRLKVGPVGDDKPDLAEASGIDVCRKFPLIVFPSIAHTH.

The chain crosses the membrane as a helical span at residues methionine 3–leucine 23. Residue cysteine 438 participates in heme binding.

The protein belongs to the cytochrome P450 family. The cofactor is heme.

The protein resides in the membrane. In Arabidopsis thaliana (Mouse-ear cress), this protein is Cytochrome P450 71A27 (CYP71A27).